A 208-amino-acid polypeptide reads, in one-letter code: Large ribosomal subunit protein bL25 (208 aa).

Belongs to the bacterial ribosomal protein bL25 family. CTC subfamily. In terms of assembly, part of the 50S ribosomal subunit; part of the 5S rRNA/L5/L18/L25 subcomplex. Contacts the 5S rRNA. Binds to the 5S rRNA independently of L5 and L18.

In terms of biological role, this is one of the proteins that binds to the 5S RNA in the ribosome where it forms part of the central protuberance. In Phenylobacterium zucineum (strain HLK1), this protein is Large ribosomal subunit protein bL25.